A 339-amino-acid polypeptide reads, in one-letter code: Uracil nucleotide/cysteinyl leukotriene receptor (339 aa).

The Extracellular portion of the chain corresponds to 1–36 (MNGLEAALPSLTDNSSLAYSEQCGQETPLENMLFAC). A glycan (N-linked (GlcNAc...) asparagine) is linked at N14. Residues 37 to 57 (FYLLDFILAFVGNALALWLFI) form a helical membrane-spanning segment. The Cytoplasmic segment spans residues 58 to 64 (WDHKSGT). A helical membrane pass occupies residues 65 to 85 (PANVFLMHLAVADLSCVLVLP). At 86-105 (TRLVYHFSGNHWPFGEIPCR) the chain is on the extracellular side. C104 and C181 are joined by a disulfide. The helical transmembrane segment at 106 to 126 (LTGFLFYLNMYASIYFLTCIS) threads the bilayer. Over 127–147 (ADRFLAIVHPVKSLKLRRPLY) the chain is Cytoplasmic. The helical transmembrane segment at 148–168 (AHLACAFLWIVVAVAMAPLLV) threads the bilayer. Residues 169–195 (SPQTVQTNHTVVCLQLYREKASHHALA) lie on the Extracellular side of the membrane. N176 is a glycosylation site (N-linked (GlcNAc...) asparagine). A helical transmembrane segment spans residues 196-216 (SLAVAFTFPFITTVTCYLLII). Over 217–232 (RSLRQGPRIEKHLKNK) the chain is Cytoplasmic. Residues 233–253 (AVRMIAMVLAIFLICFVPYHI) traverse the membrane as a helical segment. At 254 to 280 (HRSVYVLHYRGGGTSCAAQRALALGNR) the chain is on the extracellular side. The chain crosses the membrane as a helical span at residues 281–301 (ITSCLTSLNGALDPVMYFFVA). The Cytoplasmic segment spans residues 302–339 (EKFRHALCNLLCSKRLTGPPPSFEGKTNESSLSARSEL).

It belongs to the G-protein coupled receptor 1 family.

It localises to the cell membrane. In terms of biological role, dual specificity receptor for uracil nucleotides and cysteinyl leukotrienes (CysLTs). Signals through G(i) and inhibition of adenylyl cyclase. May mediate brain damage by nucleotides and CysLTs following ischemia. The sequence is that of Uracil nucleotide/cysteinyl leukotriene receptor from Mus musculus (Mouse).